The chain runs to 298 residues: Ribonuclease HII (298 aa).

The segment at 1–57 (MIREPQKSAKAASKSSAPRARSSVAKATSTKATSSKAASSKAAPSKAGADAGAAKPR) is disordered. Positions 8–55 (SAKAASKSSAPRARSSVAKATSTKATSSKAASSKAAPSKAGADAGAAK) are enriched in low complexity. The region spanning 85-273 (WPVAGCDEAG…VAAAWRKIEG (189 aa)) is the RNase H type-2 domain. Residues Asp-91, Glu-92, and Asp-182 each contribute to the a divalent metal cation site.

This sequence belongs to the RNase HII family. Mn(2+) is required as a cofactor. The cofactor is Mg(2+).

The protein localises to the cytoplasm. The catalysed reaction is Endonucleolytic cleavage to 5'-phosphomonoester.. Its function is as follows. Endonuclease that specifically degrades the RNA of RNA-DNA hybrids. The protein is Ribonuclease HII of Rhodopseudomonas palustris (strain BisB5).